A 195-amino-acid polypeptide reads, in one-letter code: ATP-dependent Clp protease proteolytic subunit (195 aa).

Serine 98 functions as the Nucleophile in the catalytic mechanism. The active site involves histidine 123.

This sequence belongs to the peptidase S14 family. In terms of assembly, fourteen ClpP subunits assemble into 2 heptameric rings which stack back to back to give a disk-like structure with a central cavity, resembling the structure of eukaryotic proteasomes.

It localises to the cytoplasm. The enzyme catalyses Hydrolysis of proteins to small peptides in the presence of ATP and magnesium. alpha-casein is the usual test substrate. In the absence of ATP, only oligopeptides shorter than five residues are hydrolyzed (such as succinyl-Leu-Tyr-|-NHMec, and Leu-Tyr-Leu-|-Tyr-Trp, in which cleavage of the -Tyr-|-Leu- and -Tyr-|-Trp bonds also occurs).. Cleaves peptides in various proteins in a process that requires ATP hydrolysis. Has a chymotrypsin-like activity. Plays a major role in the degradation of misfolded proteins. This Thermoanaerobacter pseudethanolicus (strain ATCC 33223 / 39E) (Clostridium thermohydrosulfuricum) protein is ATP-dependent Clp protease proteolytic subunit.